A 348-amino-acid polypeptide reads, in one-letter code: MEFIRIDGSYGEGGGSLLRYAIALSSVTMKPVEIYNIRVKRANPGLRPQHLNAVRALARITEATVEGDEVGSTALRFIPRKRAGGSFEIDIGTAGSISLIIQAILPACISSEEEISLRIRGGTDVPLAPPIDYMAEVFLRNMAPLGVRAELKLLRRGHYPRGGGIVELHASPSKLFPIDKVRGEKFDRVLGRCHAVKLPRSVVERISSSAIDTLRKEGLRVEIEEEWSEDGHLGPGAGIVLWTDSNPRIGADELGEKGKPSEVVGKNAASKLLDEIKAGMAFDSHMGDMIIPYLALARGRSRVGISKLTLHAESNIWLVERFLPVKFIVQGGVGSPTVIEVEGAGLEL.

ATP-binding positions include glutamine 102 and 285–288; that span reads HMGD. Histidine 311 acts as the Tele-AMP-histidine intermediate in catalysis.

This sequence belongs to the RNA 3'-terminal cyclase family. Type 1 subfamily.

The protein localises to the cytoplasm. It catalyses the reaction a 3'-end 3'-phospho-ribonucleotide-RNA + ATP = a 3'-end 2',3'-cyclophospho-ribonucleotide-RNA + AMP + diphosphate. Its function is as follows. Catalyzes the conversion of 3'-phosphate to a 2',3'-cyclic phosphodiester at the end of RNA. The mechanism of action of the enzyme occurs in 3 steps: (A) adenylation of the enzyme by ATP; (B) transfer of adenylate to an RNA-N3'P to produce RNA-N3'PP5'A; (C) and attack of the adjacent 2'-hydroxyl on the 3'-phosphorus in the diester linkage to produce the cyclic end product. The biological role of this enzyme is unknown but it is likely to function in some aspects of cellular RNA processing. This chain is RNA 3'-terminal phosphate cyclase, found in Korarchaeum cryptofilum (strain OPF8).